A 500-amino-acid polypeptide reads, in one-letter code: Glycerol kinase (500 aa).

Residue Thr12 participates in ADP binding. ATP-binding residues include Thr12, Thr13, and Ser14. A sn-glycerol 3-phosphate-binding site is contributed by Thr12. ADP is bound at residue Arg16. Residues Arg82, Glu83, Tyr134, and Asp246 each coordinate sn-glycerol 3-phosphate. Residues Arg82, Glu83, Tyr134, Asp246, and Gln247 each coordinate glycerol. 2 residues coordinate ADP: Thr268 and Gly312. ATP is bound by residues Thr268, Gly312, Gln316, and Gly413. ADP-binding residues include Gly413 and Asn417.

Belongs to the FGGY kinase family.

It catalyses the reaction glycerol + ATP = sn-glycerol 3-phosphate + ADP + H(+). It participates in polyol metabolism; glycerol degradation via glycerol kinase pathway; sn-glycerol 3-phosphate from glycerol: step 1/1. With respect to regulation, inhibited by fructose 1,6-bisphosphate (FBP). Functionally, key enzyme in the regulation of glycerol uptake and metabolism. Catalyzes the phosphorylation of glycerol to yield sn-glycerol 3-phosphate. This chain is Glycerol kinase, found in Saccharopolyspora erythraea (strain ATCC 11635 / DSM 40517 / JCM 4748 / NBRC 13426 / NCIMB 8594 / NRRL 2338).